Reading from the N-terminus, the 389-residue chain is Chalcone synthase 2 (389 aa).

Cysteine 164 is an active-site residue.

It belongs to the thiolase-like superfamily. Chalcone/stilbene synthases family.

The enzyme catalyses (E)-4-coumaroyl-CoA + 3 malonyl-CoA + 3 H(+) = 2',4,4',6'-tetrahydroxychalcone + 3 CO2 + 4 CoA. The protein operates within secondary metabolite biosynthesis; flavonoid biosynthesis. The primary product of this enzyme is 4,2',4',6'-tetrahydroxychalcone (also termed naringenin-chalcone or chalcone) which can under specific conditions spontaneously isomerize into naringenin. In Solanum lycopersicum (Tomato), this protein is Chalcone synthase 2 (CHS2).